A 358-amino-acid polypeptide reads, in one-letter code: Heme A synthase 1 (358 aa).

Transmembrane regions (helical) follow at residues 11–31 (LVGTWLLVICFMIFGMVVGGG), 98–117 (WGRLMAVVFLVPLAVFRLRG), 123–143 (LTAWLLFLFGLGAGEATMGWY), 159–179 (LYLGPHFVLAMLIFTAMLWTA), and 199–219 (LLSVSIGLIIATIGLGALVAA). Histidine 262 is a heme binding site. The next 3 membrane-spanning stretches (helical) occupy residues 264–284 (VAATVTAIVVVIAAAMGLRAP), 292–312 (LFLLLAGLVSLQYILGMSTLV), and 315–335 (MAELGYVHELNAVLLLAACIA). Histidine 322 contacts heme.

The protein belongs to the COX15/CtaA family. Type 2 subfamily. As to quaternary structure, interacts with CtaB. It depends on heme b as a cofactor.

It localises to the cell membrane. It carries out the reaction Fe(II)-heme o + 2 A + H2O = Fe(II)-heme a + 2 AH2. It participates in porphyrin-containing compound metabolism; heme A biosynthesis; heme A from heme O: step 1/1. Catalyzes the conversion of heme O to heme A by two successive hydroxylations of the methyl group at C8. The first hydroxylation forms heme I, the second hydroxylation results in an unstable dihydroxymethyl group, which spontaneously dehydrates, resulting in the formyl group of heme A. This is Heme A synthase 1 from Acidiphilium cryptum (strain JF-5).